Reading from the N-terminus, the 379-residue chain is Anhydro-N-acetylmuramic acid kinase (379 aa).

Gly-9–Asp-16 lines the ATP pocket.

Belongs to the anhydro-N-acetylmuramic acid kinase family.

It catalyses the reaction 1,6-anhydro-N-acetyl-beta-muramate + ATP + H2O = N-acetyl-D-muramate 6-phosphate + ADP + H(+). It functions in the pathway amino-sugar metabolism; 1,6-anhydro-N-acetylmuramate degradation. Its pathway is cell wall biogenesis; peptidoglycan recycling. Its function is as follows. Catalyzes the specific phosphorylation of 1,6-anhydro-N-acetylmuramic acid (anhMurNAc) with the simultaneous cleavage of the 1,6-anhydro ring, generating MurNAc-6-P. Is required for the utilization of anhMurNAc either imported from the medium or derived from its own cell wall murein, and thus plays a role in cell wall recycling. This is Anhydro-N-acetylmuramic acid kinase from Prochlorococcus marinus (strain MIT 9303).